A 104-amino-acid polypeptide reads, in one-letter code: Large ribosomal subunit protein uL24 (104 aa).

The protein belongs to the universal ribosomal protein uL24 family. In terms of assembly, part of the 50S ribosomal subunit.

In terms of biological role, one of two assembly initiator proteins, it binds directly to the 5'-end of the 23S rRNA, where it nucleates assembly of the 50S subunit. Functionally, one of the proteins that surrounds the polypeptide exit tunnel on the outside of the subunit. This is Large ribosomal subunit protein uL24 from Psychromonas ingrahamii (strain DSM 17664 / CCUG 51855 / 37).